Consider the following 59-residue polypeptide: Large ribosomal subunit protein uL30 (59 aa).

This sequence belongs to the universal ribosomal protein uL30 family. As to quaternary structure, part of the 50S ribosomal subunit.

This Aliivibrio salmonicida (strain LFI1238) (Vibrio salmonicida (strain LFI1238)) protein is Large ribosomal subunit protein uL30.